Reading from the N-terminus, the 1090-residue chain is UPF0507 protein SCY_4172 (1090 aa).

A VPS9 domain is found at 289 to 436 (FSVNQLLTDF…FEDFNKNTGN (148 aa)).

The protein belongs to the UPF0507 family.

In Saccharomyces cerevisiae (strain YJM789) (Baker's yeast), this protein is UPF0507 protein SCY_4172.